A 214-amino-acid polypeptide reads, in one-letter code: Large ribosomal subunit protein uL3 (214 aa).

An N5-methylglutamine modification is found at Q155.

The protein belongs to the universal ribosomal protein uL3 family. Part of the 50S ribosomal subunit. Forms a cluster with proteins L14 and L19. In terms of processing, methylated by PrmB.

One of the primary rRNA binding proteins, it binds directly near the 3'-end of the 23S rRNA, where it nucleates assembly of the 50S subunit. The sequence is that of Large ribosomal subunit protein uL3 from Acinetobacter baumannii (strain ACICU).